Consider the following 675-residue polypeptide: Heat shock 70 kDa protein 12A (675 aa).

Positions 1–45 (MADKEAGGGDAGPRETAPTSTYSSPARSLGDTGITPLSPSHILND) are disordered. At Ala2 the chain carries N-acetylalanine. Residues 17-26 (APTSTYSSPA) show a composition bias toward polar residues.

This sequence belongs to the heat shock protein 70 family. In terms of assembly, interacts with SORL1 (via cytosolic C-terminus); this interaction affects SORL1 internalization and subcellular localization. In terms of tissue distribution, expressed most strongly in brain, kidney and heart with little or no expression in other tissues. In the brain, expressed in glial cells, including astrocytes (at protein level). In the aorta, preferentially expressed in lesions.

Its subcellular location is the cytoplasm. The protein resides in the nucleus. Its function is as follows. Adapter protein for SORL1, but not SORT1. Delays SORL1 internalization and affects SORL1 subcellular localization. The sequence is that of Heat shock 70 kDa protein 12A (Hspa12a) from Mus musculus (Mouse).